Reading from the N-terminus, the 261-residue chain is MTDSAKPQNPDPGHESRRVAPLAGSPRSPFLIEFPEDSFTAVFLGREKRFLVEAERNGHLFQAHCNNSGSMLGLLRPGSDILLSVSPNPSRRLPYTLESIKLGSHWVGVNTLVPNRILRLAWDRGILPELIGYDRFQNEKTSGESRLDAFAEGPAGQVWIEAKNVTLVEDDVACFPDAVTVRGQKHMRELTALARAGRRAACFFLVQRPDASCFAPADFIDPVYAELFHAAVHAGVEIWPYEAVVTRQGIALGRRLKVVGH.

The disordered stretch occupies residues 1-23 (MTDSAKPQNPDPGHESRRVAPLA).

This sequence belongs to the SfsA family.

The chain is Sugar fermentation stimulation protein homolog from Syntrophobacter fumaroxidans (strain DSM 10017 / MPOB).